The following is an 89-amino-acid chain: Small ribosomal subunit protein uS15 (89 aa).

Belongs to the universal ribosomal protein uS15 family. Part of the 30S ribosomal subunit. Forms a bridge to the 50S subunit in the 70S ribosome, contacting the 23S rRNA.

One of the primary rRNA binding proteins, it binds directly to 16S rRNA where it helps nucleate assembly of the platform of the 30S subunit by binding and bridging several RNA helices of the 16S rRNA. Its function is as follows. Forms an intersubunit bridge (bridge B4) with the 23S rRNA of the 50S subunit in the ribosome. In Ruegeria sp. (strain TM1040) (Silicibacter sp.), this protein is Small ribosomal subunit protein uS15.